A 458-amino-acid chain; its full sequence is ATP synthase subunit beta (458 aa).

ATP is bound at residue glycine 148–threonine 155.

The protein belongs to the ATPase alpha/beta chains family. In terms of assembly, F-type ATPases have 2 components, CF(1) - the catalytic core - and CF(0) - the membrane proton channel. CF(1) has five subunits: alpha(3), beta(3), gamma(1), delta(1), epsilon(1). CF(0) has three main subunits: a(1), b(2) and c(9-12). The alpha and beta chains form an alternating ring which encloses part of the gamma chain. CF(1) is attached to CF(0) by a central stalk formed by the gamma and epsilon chains, while a peripheral stalk is formed by the delta and b chains.

It is found in the cell inner membrane. The catalysed reaction is ATP + H2O + 4 H(+)(in) = ADP + phosphate + 5 H(+)(out). Produces ATP from ADP in the presence of a proton gradient across the membrane. The catalytic sites are hosted primarily by the beta subunits. The chain is ATP synthase subunit beta from Shewanella woodyi (strain ATCC 51908 / MS32).